The primary structure comprises 424 residues: MSVDGRQAVIVVARLSGKGDLALLDELRKLVEAAGYAVAGELLQKSRYEDPKYNIGRGKVLELKRLVEEKKPLKVVFLNDLKPNQAYNLSKETGVEVIDRYELILEIFAKRAGSRESKLQIELAKLKRELSFAKEYINLAKRGELHGFLGGGKYAVDAYYAYVSMRISKIEEELRKIRKMKEERIARRVEAGLYTVALTGYTGAGKTTLFNVLTGENGYIDGKPFATLSTLSRRTYFHGFPVLVTDTIGFIDDLPDALVDAFYTTLRETLAADVILLVLDVSDTPAEIRRKLTASMEVLLNLGVPPTRILLVGNKIDKVSSAELEERERLLEDSGLRYTLISAARRIGIHELTQAVVEMLPEKVSATLALTREALAEDLRELLDRCRVREVVQGSDGKLLVVVEGRRDIVARLQARAGMGLVDG.

The 171-residue stretch at 194 to 364 (YTVALTGYTG…AVVEMLPEKV (171 aa)) folds into the Hflx-type G domain. Residues 200 to 207 (GYTGAGKT), 225 to 229 (FATLS), 246 to 249 (DTIG), 314 to 317 (NKID), and 342 to 344 (SAA) each bind GTP. Residues Thr-207 and Thr-227 each coordinate Mg(2+).

This sequence belongs to the TRAFAC class OBG-HflX-like GTPase superfamily. HflX GTPase family. Monomer. Associates with the 50S ribosomal subunit. Mg(2+) serves as cofactor.

Its subcellular location is the cytoplasm. Functionally, GTPase that associates with the 50S ribosomal subunit and may have a role during protein synthesis or ribosome biogenesis. The sequence is that of GTPase HflX from Thermofilum pendens (strain DSM 2475 / Hrk 5).